Consider the following 583-residue polypeptide: Protein FMP25, mitochondrial (583 aa).

The N-terminal 25 residues, 1–25 (MSFRLFTRTSQRLPRLNWVSPIRRY), are a transit peptide targeting the mitochondrion. A helical transmembrane segment spans residues 83-105 (AVGQGILILVVVGGLGTAYLRWP). 4 RCC1 repeats span residues 332 to 389 (KGQF…AIDK), 390 to 452 (TGEI…VTIR), 459 to 510 (DHHY…TETE), and 512 to 569 (ENEV…KEQR).

It is found in the mitochondrion membrane. This is Protein FMP25, mitochondrial (FMP25) from Saccharomyces cerevisiae (strain ATCC 204508 / S288c) (Baker's yeast).